The following is a 445-amino-acid chain: Argininosuccinate synthase (445 aa).

ATP-binding positions include 17–25 (AFSGGLDTS) and A43. An L-citrulline-binding site is contributed by Y99. Residues G129 and T131 each coordinate ATP. Residues T131, N135, and D136 each coordinate L-aspartate. N135 contacts L-citrulline. D136 is a binding site for ATP. Residues R139 and S192 each contribute to the L-citrulline site. D194 contributes to the ATP binding site. L-citrulline is bound by residues T201, E203, and E280.

The protein belongs to the argininosuccinate synthase family. Type 2 subfamily. As to quaternary structure, homotetramer.

Its subcellular location is the cytoplasm. The enzyme catalyses L-citrulline + L-aspartate + ATP = 2-(N(omega)-L-arginino)succinate + AMP + diphosphate + H(+). It functions in the pathway amino-acid biosynthesis; L-arginine biosynthesis; L-arginine from L-ornithine and carbamoyl phosphate: step 2/3. In Bordetella petrii (strain ATCC BAA-461 / DSM 12804 / CCUG 43448), this protein is Argininosuccinate synthase.